We begin with the raw amino-acid sequence, 102 residues long: Small ribosomal subunit protein uS10 (102 aa).

It belongs to the universal ribosomal protein uS10 family. Part of the 30S ribosomal subunit.

Its function is as follows. Involved in the binding of tRNA to the ribosomes. The sequence is that of Small ribosomal subunit protein uS10 from Chelativorans sp. (strain BNC1).